We begin with the raw amino-acid sequence, 122 residues long: Small ribosomal subunit protein uS12 (122 aa).

The residue at position 89 (D89) is a 3-methylthioaspartic acid.

The protein belongs to the universal ribosomal protein uS12 family. In terms of assembly, part of the 30S ribosomal subunit. Contacts proteins S8 and S17. May interact with IF1 in the 30S initiation complex.

Functionally, with S4 and S5 plays an important role in translational accuracy. Its function is as follows. Interacts with and stabilizes bases of the 16S rRNA that are involved in tRNA selection in the A site and with the mRNA backbone. Located at the interface of the 30S and 50S subunits, it traverses the body of the 30S subunit contacting proteins on the other side and probably holding the rRNA structure together. The combined cluster of proteins S8, S12 and S17 appears to hold together the shoulder and platform of the 30S subunit. The chain is Small ribosomal subunit protein uS12 from Neorickettsia sennetsu (strain ATCC VR-367 / Miyayama) (Ehrlichia sennetsu).